The following is an 87-amino-acid chain: Anaphase-promoting complex subunit 11 (87 aa).

Residues 35–77 form an RING-type; atypical zinc finger; that stretch reads CVDCKIPGDDCPPVWGVCNHAFHMHCILKWLNANELQQCPMCR.

It belongs to the RING-box family. In terms of assembly, the APC/C is composed of at least 13 subunits that stay tightly associated throughout the cell cycle: anapc1, anapc2, anapc3, anapc4, anapc5, anapc6, anapc7, anapc8, anapc10, anapc11, cdc20, cdc26 and cdh1.

Its subcellular location is the nucleus. It participates in protein modification; protein ubiquitination. Functionally, component of the anaphase promoting complex/cyclosome (APC/C), a cell cycle-regulated E3 ubiquitin-protein ligase complex that controls progression through mitosis and the G1 phase of the cell cycle. The sequence is that of Anaphase-promoting complex subunit 11 (anapc11) from Dictyostelium discoideum (Social amoeba).